A 154-amino-acid polypeptide reads, in one-letter code: SsrA-binding protein (154 aa).

Belongs to the SmpB family.

It is found in the cytoplasm. Required for rescue of stalled ribosomes mediated by trans-translation. Binds to transfer-messenger RNA (tmRNA), required for stable association of tmRNA with ribosomes. tmRNA and SmpB together mimic tRNA shape, replacing the anticodon stem-loop with SmpB. tmRNA is encoded by the ssrA gene; the 2 termini fold to resemble tRNA(Ala) and it encodes a 'tag peptide', a short internal open reading frame. During trans-translation Ala-aminoacylated tmRNA acts like a tRNA, entering the A-site of stalled ribosomes, displacing the stalled mRNA. The ribosome then switches to translate the ORF on the tmRNA; the nascent peptide is terminated with the 'tag peptide' encoded by the tmRNA and targeted for degradation. The ribosome is freed to recommence translation, which seems to be the essential function of trans-translation. This Solidesulfovibrio magneticus (strain ATCC 700980 / DSM 13731 / RS-1) (Desulfovibrio magneticus) protein is SsrA-binding protein.